Reading from the N-terminus, the 261-residue chain is tRNA pseudouridine synthase A (261 aa).

Catalysis depends on D51, which acts as the Nucleophile. Residue Y109 coordinates substrate.

It belongs to the tRNA pseudouridine synthase TruA family. As to quaternary structure, homodimer.

It catalyses the reaction uridine(38/39/40) in tRNA = pseudouridine(38/39/40) in tRNA. Functionally, formation of pseudouridine at positions 38, 39 and 40 in the anticodon stem and loop of transfer RNAs. The chain is tRNA pseudouridine synthase A from Shewanella piezotolerans (strain WP3 / JCM 13877).